Consider the following 82-residue polypeptide: Small, acid-soluble spore protein gamma-type (82 aa).

Polar residues-rich tracts occupy residues 1-24 (MANS…ASGQ) and 32-50 (ASET…SAAG). The interval 1-82 (MANSNNKTNA…SAEQNKQQNS (82 aa)) is disordered. Repeats lie at residues 19-45 (QSAS…KQNQ) and 46-72 (QSAA…QQNQ). A compositionally biased stretch (low complexity) spans 69 to 82 (QQNQSAEQNKQQNS).

Belongs to the gamma-type SASP family.

Its function is as follows. SASP are bound to spore DNA. They are double-stranded DNA-binding proteins that cause DNA to change to an a-like conformation. They protect the DNA backbone from chemical and enzymatic cleavage and are thus involved in dormant spore's high resistance to UV light. In Bacillus subtilis, this protein is Small, acid-soluble spore protein gamma-type.